The sequence spans 369 residues: UDP-N-acetylglucosamine--N-acetylmuramyl-(pentapeptide) pyrophosphoryl-undecaprenol N-acetylglucosamine transferase (369 aa).

UDP-N-acetyl-alpha-D-glucosamine contacts are provided by residues 15–17 (TGG), N126, R169, S197, and Q299.

This sequence belongs to the glycosyltransferase 28 family. MurG subfamily.

The protein resides in the cell inner membrane. It catalyses the reaction di-trans,octa-cis-undecaprenyl diphospho-N-acetyl-alpha-D-muramoyl-L-alanyl-D-glutamyl-meso-2,6-diaminopimeloyl-D-alanyl-D-alanine + UDP-N-acetyl-alpha-D-glucosamine = di-trans,octa-cis-undecaprenyl diphospho-[N-acetyl-alpha-D-glucosaminyl-(1-&gt;4)]-N-acetyl-alpha-D-muramoyl-L-alanyl-D-glutamyl-meso-2,6-diaminopimeloyl-D-alanyl-D-alanine + UDP + H(+). It participates in cell wall biogenesis; peptidoglycan biosynthesis. Cell wall formation. Catalyzes the transfer of a GlcNAc subunit on undecaprenyl-pyrophosphoryl-MurNAc-pentapeptide (lipid intermediate I) to form undecaprenyl-pyrophosphoryl-MurNAc-(pentapeptide)GlcNAc (lipid intermediate II). The protein is UDP-N-acetylglucosamine--N-acetylmuramyl-(pentapeptide) pyrophosphoryl-undecaprenol N-acetylglucosamine transferase of Methylobacterium radiotolerans (strain ATCC 27329 / DSM 1819 / JCM 2831 / NBRC 15690 / NCIMB 10815 / 0-1).